Here is an 85-residue protein sequence, read N- to C-terminus: Toxin TdNa9 (85 aa).

A signal peptide spans 1-21 (MLKFAIAVALLLFIGLELREA). In terms of domain architecture, LCN-type CS-alpha/beta spans 22-84 (RDGYPQSKVN…YGDPGTKPCM (63 aa)). Cystine bridges form between cysteine 33/cysteine 83, cysteine 37/cysteine 58, cysteine 43/cysteine 63, and cysteine 47/cysteine 65.

The protein belongs to the long (4 C-C) scorpion toxin superfamily. Sodium channel inhibitor family. Beta subfamily. In terms of tissue distribution, expressed by the venom gland.

Its subcellular location is the secreted. In terms of biological role, alpha toxins bind voltage-independently at site-3 of sodium channels (Nav) and inhibit the inactivation of the activated channels, thereby blocking neuronal transmission. This toxin binds, in vitro, to sodium channels and inhibits the inactivation of the activated channels. Seems not toxic to mice, crickets and sweet-water shrimps. The sequence is that of Toxin TdNa9 from Tityus discrepans (Venezuelan scorpion).